Here is a 427-residue protein sequence, read N- to C-terminus: MYSRKSLSLISKCGQLSRLNAQAALQARRHLSIHEYRSAQLLREYGIGTPEGFPAFTPEEAFEAAKKLNTNKLVIKAQALTGGRGKGHFDTGYKSGVHMIESPQQAEDVAKEMLNHNLITKQTGIAGKPVSAVYIVKRVDTKHEAYLSILMDRQTKKPMIIASSQGGMNIEEVAERTPDAIKKFSIETSKGLSPQMAKDVAKSLGFSPDAQDEAAKAVSNLYKIFMERDATQVEINPLSEIEHDPTHKIMCTDAKFGFDDNASFRQEKIYSWRDLSQEDPDEVKAKKYDLNFVKLKGNIGCLVNGAGLAMATMDVIKLNGGDPANFLDCGGGATPETIKQGFELILSNKNVDAIFVNIFGGIVRCDYVALGLVEAARELEVRVPIVARLQGTKVEEGRDIINKSGVKIYSFDELDPAAKKVVELTQN.

Residues 1–30 (MYSRKSLSLISKCGQLSRLNAQAALQARRH) constitute a mitochondrion transit peptide. Residues 39-284 (AQLLREYGIG…LSQEDPDEVK (246 aa)) form the ATP-grasp domain. Residues K76 and 83–85 (GRG) contribute to the ATP site. S102 bears the Phosphoserine mark. E144 provides a ligand contact to ATP. Mg(2+) is bound by residues N236 and D253. A phosphoserine mark is found at S263 and S276. Substrate contacts are provided by residues N304 and 361-363 (GIV).

Belongs to the succinate/malate CoA ligase beta subunit family. Heterodimer of an alpha and a beta subunit. Mg(2+) is required as a cofactor.

It localises to the mitochondrion. The catalysed reaction is succinate + ATP + CoA = succinyl-CoA + ADP + phosphate. It functions in the pathway carbohydrate metabolism; tricarboxylic acid cycle; succinate from succinyl-CoA (ligase route): step 1/1. Functionally, succinyl-CoA synthetase functions in the citric acid cycle (TCA), coupling the hydrolysis of succinyl-CoA to the synthesis of ATP and thus represents the only step of substrate-level phosphorylation in the TCA. The beta subunit provides nucleotide specificity of the enzyme and binds the substrate succinate, while the binding sites for coenzyme A and phosphate are found in the alpha subunit. The chain is Succinate--CoA ligase [ADP-forming] subunit beta, mitochondrial from Saccharomyces cerevisiae (strain ATCC 204508 / S288c) (Baker's yeast).